A 352-amino-acid polypeptide reads, in one-letter code: Neuronal growth regulator 1 (352 aa).

The N-terminal stretch at 1-35 is a signal peptide; the sequence is MVPLVRGAGGSHQWLAAVLLGLCCLLPAGRLAAPG. Ig-like C2-type domains are found at residues 36-132, 137-219, and 223-311; these read GDFP…VHLT, PKIF…KVTV, and PTIQ…LPLN. C58 and C116 are oxidised to a cystine. N71 and N153 each carry an N-linked (GlcNAc...) asparagine glycan. 2 disulfides stabilise this stretch: C158–C201 and C243–C295. 4 N-linked (GlcNAc...) asparagine glycosylation sites follow: N273, N284, N292, and N305. Residue G322 is the site of GPI-anchor amidated glycine attachment. Residues 323–352 constitute a propeptide, removed in mature form; that stretch reads DAEVLFSCWYLVLTLSSLTSIFYLKNIILH.

It belongs to the immunoglobulin superfamily. IgLON family. In terms of assembly, interacts with CEPU-1 and LAMP. Post-translationally, glycosylated. Expressed in embryonic retina, telencephalon, tectum, cerebellum and diencephalon (at protein level).

The protein resides in the cell membrane. Functionally, may be involved in cell-adhesion. May participate in the regulation of neurite outgrowth in the developing brain. The sequence is that of Neuronal growth regulator 1 (NEGR1) from Gallus gallus (Chicken).